The sequence spans 469 residues: 3-isopropylmalate dehydratase large subunit (469 aa).

[4Fe-4S] cluster is bound by residues C350, C410, and C413.

It belongs to the aconitase/IPM isomerase family. LeuC type 1 subfamily. Heterodimer of LeuC and LeuD. Requires [4Fe-4S] cluster as cofactor.

The catalysed reaction is (2R,3S)-3-isopropylmalate = (2S)-2-isopropylmalate. It participates in amino-acid biosynthesis; L-leucine biosynthesis; L-leucine from 3-methyl-2-oxobutanoate: step 2/4. Catalyzes the isomerization between 2-isopropylmalate and 3-isopropylmalate, via the formation of 2-isopropylmaleate. This Chelativorans sp. (strain BNC1) protein is 3-isopropylmalate dehydratase large subunit.